A 41-amino-acid chain; its full sequence is Antifungal peptide 2 (41 aa).

The residue at position 1 (Gln-1) is a Pyrrolidone carboxylic acid. 5 disulfides stabilise this stretch: Cys-3-Cys-17, Cys-7-Cys-37, Cys-11-Cys-23, Cys-16-Cys-30, and Cys-35-Cys-39. Residues 4 to 41 (ASRCPRPCNAGLCCSIYGYCGSGAAYCGAGNCRCQCRG) form the Chitin-binding type-1 domain.

As to quaternary structure, monomer.

In terms of biological role, has antifungal activity against P.infestans, A.lycopersici, V.dahliae, G.zeae, A.nicotianae, F.moniliforme, F.oxysporum and C.gossypii. In Eucommia ulmoides (Hardy rubber tree), this protein is Antifungal peptide 2.